Here is a 440-residue protein sequence, read N- to C-terminus: Gamma-aminobutyric acid receptor subunit pi (440 aa).

Positions 1–23 (MSYSLYLAFVCLNLLAQRMCIQG) are cleaved as a signal peptide. Topologically, residues 24-241 (NQFNVEVSRS…LVLQFELRRN (218 aa)) are extracellular. Residues asparagine 43, asparagine 102, and asparagine 145 are each glycosylated (N-linked (GlcNAc...) asparagine). A disulfide bond links cysteine 160 and cysteine 174. Asparagine 196 and asparagine 228 each carry an N-linked (GlcNAc...) asparagine glycan. A helical membrane pass occupies residues 242–262 (VLYFILETYVPSTFLVVLSWV). Topologically, residues 263–270 (SFWISLES) are cytoplasmic. The chain crosses the membrane as a helical span at residues 271–290 (VPARTCIGVTTVLSMTTLMI). The Extracellular segment spans residues 291-301 (GSRTSLPNTNC). A helical membrane pass occupies residues 302–322 (FIKAIDVYLGICFSFVFGALL). Residues 323–419 (EYAVAHYSSL…NPSNVDRYSK (97 aa)) are Cytoplasmic-facing. The helical transmembrane segment at 420 to 440 (LLFPLIFMLANVFYWAYYMYF) threads the bilayer.

This sequence belongs to the ligand-gated ion channel (TC 1.A.9) family. Gamma-aminobutyric acid receptor (TC 1.A.9.5) subfamily. GABRP sub-subfamily. Heteropentamer, formed by a combination of alpha (GABRA1-6), beta (GABRB1-3), gamma (GABRG1-3), delta (GABRD), epsilon (GABRE), rho (GABRR1-3), pi (GABRP) and theta (GABRQ) chains, each subunit exhibiting distinct physiological and pharmacological properties. As to expression, expressed in lungs, in alveolar epithelium.

It is found in the cell membrane. The protein localises to the apical cell membrane. It carries out the reaction chloride(in) = chloride(out). Pi subunit of the heteropentameric ligand-gated chloride channel gated by gamma-aminobutyric acid (GABA). GABA-gated chloride channels, also named GABA(A) receptors (GABAAR), consist of five subunits arranged around a central pore and contain GABA active binding site(s) located at the alpha and beta subunit interfaces. When activated by GABA, GABAARs selectively allow the flow of chloride anions across the cell membrane down their electrochemical gradient. Pi-containing GABAARs are mostly located in peripheral tissues. In the uterus, pi subunits modulate uterus contraction by altering the sensitivity of GABAARs to pregnanolone. In the lungs, pi-containing GABAARs contribute to pulmonary fluid transport via luminal secretion of chloride. In Rattus norvegicus (Rat), this protein is Gamma-aminobutyric acid receptor subunit pi.